The sequence spans 229 residues: MTSKSLNAWVIHKQWSGDTSARLKLFTRELGLINCLCKGGRTPKKQSLLQAFIPLWVSIEERYDQYYTRNIESTSSRLDLEGHSLFSGLYINELLYYTLSPDFPDSDLFDAYLFTLNGIALAREREAIEALLRRFEWALLKACGYTFSFLHEARTGELIVPDSHYQFVAGEGFILGGDKKIPGEHLLAIAADNLSESAYLKSAKFIMRQAIDHLLGGREIKARSLYGPA.

This sequence belongs to the RecO family.

Involved in DNA repair and RecF pathway recombination. This chain is DNA repair protein RecO, found in Legionella pneumophila (strain Paris).